Reading from the N-terminus, the 102-residue chain is ATP-dependent Clp protease adapter protein ClpS (102 aa).

Belongs to the ClpS family. As to quaternary structure, binds to the N-terminal domain of the chaperone ClpA.

Functionally, involved in the modulation of the specificity of the ClpAP-mediated ATP-dependent protein degradation. The chain is ATP-dependent Clp protease adapter protein ClpS from Shewanella denitrificans (strain OS217 / ATCC BAA-1090 / DSM 15013).